The sequence spans 176 residues: ATP-dependent protease subunit HslV (176 aa).

Thr-6 is a catalytic residue. Residues Gly-161, Cys-164, and Thr-167 each contribute to the Na(+) site.

It belongs to the peptidase T1B family. HslV subfamily. In terms of assembly, a double ring-shaped homohexamer of HslV is capped on each side by a ring-shaped HslU homohexamer. The assembly of the HslU/HslV complex is dependent on binding of ATP.

It localises to the cytoplasm. The catalysed reaction is ATP-dependent cleavage of peptide bonds with broad specificity.. Allosterically activated by HslU binding. In terms of biological role, protease subunit of a proteasome-like degradation complex believed to be a general protein degrading machinery. This chain is ATP-dependent protease subunit HslV, found in Thermotoga sp. (strain RQ2).